Consider the following 142-residue polypeptide: Small ribosomal subunit protein eS6 (142 aa).

The segment at 117-142 is disordered; sequence EKPLDELAPKKEKKEGAAGGRAPAKK. Positions 118 to 132 are enriched in basic and acidic residues; sequence KPLDELAPKKEKKEG.

Belongs to the eukaryotic ribosomal protein eS6 family.

The sequence is that of Small ribosomal subunit protein eS6 from Methanocella arvoryzae (strain DSM 22066 / NBRC 105507 / MRE50).